Reading from the N-terminus, the 1003-residue chain is Rho-associated protein kinase 1 (1003 aa).

The segment at 1-28 is disordered; sequence VAPVVPDLSSDIDTSNFDDLEEDKGEEE. The AGC-kinase C-terminal domain occupies 1–58; that stretch reads VAPVVPDLSSDIDTSNFDDLEEDKGEEETFPIPKAFVGNQLPFVGFTYYSNRRYLSSA. The span at 16 to 28 shows a compositional bias: acidic residues; the sequence is NFDDLEEDKGEEE. The interaction with FHOD1 stretch occupies residues 17-376; sequence FDDLEEDKGE…KKLKEEREAR (360 aa). The stretch at 71–341 forms a coiled coil; sequence KSLQESLQKT…RLEQEVNEHK (271 aa). The 78-residue stretch at 128 to 205 folds into the REM-1 domain; the sequence is STVSQIEKEK…LEEANDLLRT (78 aa). Lys-296 is subject to N6-acetyllysine. Residues 356-595 are SHROOM3 binding; that stretch reads EAKSVAMCEM…TVSRLEEANS (240 aa). One can recognise a RhoBD domain in the interval 598-664; sequence TKDIEILRRE…LAEIMNRKDF (67 aa). The tract at residues 647–659 is RHOA binding; it reads LKTQAVNKLAEIM. Residues 660 to 751 adopt a coiled-coil conformation; that stretch reads NRKDFKIDRK…KLLDLSDSTS (92 aa). Phosphoserine is present on residues Ser-754 and Ser-757. Positions 764–1003 are auto-inhibitory; it reads NLPESRIEGW…VVKNTSGKTR (240 aa). One can recognise a PH domain in the interval 767–966; sequence ESRIEGWLSV…WVTHLVKKIP (200 aa). The Phorbol-ester/DAG-type zinc-finger motif lies at 877–930; that stretch reads GHEFIPTLYHFPANCDACAKPLWHVFKPPPALECRRCHVKCHRDHLDKKEDLIC. The disordered stretch occupies residues 968 to 1003; it reads NPPSGFVRASPRTLSTRSTANQSFRKVVKNTSGKTR. Residue Ser-977 is modified to Phosphoserine. The span at 979–1003 shows a compositional bias: polar residues; it reads RTLSTRSTANQSFRKVVKNTSGKTR.

Belongs to the protein kinase superfamily. AGC Ser/Thr protein kinase family. In terms of assembly, homodimer. Interacts with RHOA (activated by GTP), RHOB, RHOC, GEM, MYLC2B, RHOE, PPP1R12A, LIMK1, LIMK2, TSG101, CHORDC1, DAPK3, PFN1, PTEN and JIP3. Interacts with ITGB1BP1 (via N-terminus and PTB domain). Interacts with FHOD1 in a Src-dependent manner. Interacts with SHROOM3. The cofactor is Mg(2+). In terms of processing, autophosphorylated on serine and threonine residues. Cleaved by caspase-3 during apoptosis. This leads to constitutive activation of the kinase and membrane blebbing.

It is found in the cytoplasm. Its subcellular location is the cytoskeleton. It localises to the microtubule organizing center. The protein resides in the centrosome. The protein localises to the centriole. It is found in the golgi apparatus membrane. Its subcellular location is the cell projection. It localises to the bleb. The protein resides in the cell membrane. The protein localises to the lamellipodium. It is found in the ruffle. It catalyses the reaction L-seryl-[protein] + ATP = O-phospho-L-seryl-[protein] + ADP + H(+). The enzyme catalyses L-threonyl-[protein] + ATP = O-phospho-L-threonyl-[protein] + ADP + H(+). With respect to regulation, activated by RHOA binding. Inhibited by Y-27632. Functionally, protein kinase which is a key regulator of actin cytoskeleton and cell polarity. Involved in regulation of smooth muscle contraction, actin cytoskeleton organization, stress fiber and focal adhesion formation, neurite retraction, cell adhesion and motility via phosphorylation of DAPK3, GFAP, LIMK1, LIMK2, MYL9/MLC2, TPPP, PFN1 and PPP1R12A. Phosphorylates FHOD1 and acts synergistically with it to promote SRC-dependent non-apoptotic plasma membrane blebbing. Phosphorylates JIP3 and regulates the recruitment of JNK to JIP3 upon UVB-induced stress. Acts as a suppressor of inflammatory cell migration by regulating PTEN phosphorylation and stability. Acts as a negative regulator of VEGF-induced angiogenic endothelial cell activation. Required for centrosome positioning and centrosome-dependent exit from mitosis. Plays a role in terminal erythroid differentiation. May regulate closure of the eyelids and ventral body wall by inducing the assembly of actomyosin bundles. Promotes keratinocyte terminal differentiation. Involved in osteoblast compaction through the fibronectin fibrillogenesis cell-mediated matrix assembly process, essential for osteoblast mineralization. The chain is Rho-associated protein kinase 1 (ROCK1) from Pan troglodytes (Chimpanzee).